A 213-amino-acid polypeptide reads, in one-letter code: Mediator of RNA polymerase II transcription subunit 7 (213 aa).

The tract at residues 96 to 120 (TELENGTTTEVEPSPQDSQSGTNYE) is disordered. Residues 97-120 (ELENGTTTEVEPSPQDSQSGTNYE) show a composition bias toward polar residues.

Belongs to the Mediator complex subunit 7 family. As to quaternary structure, component of the Mediator complex.

It is found in the nucleus. Component of the Mediator complex, a coactivator involved in the regulated transcription of nearly all RNA polymerase II-dependent genes. Mediator functions as a bridge to convey information from gene-specific regulatory proteins to the basal RNA polymerase II transcription machinery. Mediator is recruited to promoters by direct interactions with regulatory proteins and serves as a scaffold for the assembly of a functional preinitiation complex with RNA polymerase II and the general transcription factors. The chain is Mediator of RNA polymerase II transcription subunit 7 (MED7) from Kluyveromyces lactis (strain ATCC 8585 / CBS 2359 / DSM 70799 / NBRC 1267 / NRRL Y-1140 / WM37) (Yeast).